Reading from the N-terminus, the 214-residue chain is Putative AgrB-like protein (214 aa).

Helical transmembrane passes span 41 to 61, 82 to 102, 109 to 129, 154 to 174, and 182 to 202; these read IISV…LIFL, CTLL…SSFF, IIVF…FKFA, ILTI…NLGW, and LSII…GNIL.

The protein belongs to the AgrB family.

The protein localises to the cell membrane. In terms of biological role, may be involved in the proteolytic processing of a quorum sensing system signal molecule precursor. This Clostridium perfringens (strain SM101 / Type A) protein is Putative AgrB-like protein.